A 382-amino-acid polypeptide reads, in one-letter code: Galactokinase (382 aa).

Substrate is bound at residue 34 to 37; the sequence is EHTD. Residue 124-130 coordinates ATP; sequence GAGLSSS. Positions 130 and 162 each coordinate Mg(2+). Catalysis depends on Asp174, which acts as the Proton acceptor. Residue Tyr223 participates in substrate binding.

It belongs to the GHMP kinase family. GalK subfamily.

It is found in the cytoplasm. The enzyme catalyses alpha-D-galactose + ATP = alpha-D-galactose 1-phosphate + ADP + H(+). The protein operates within carbohydrate metabolism; galactose metabolism. Functionally, catalyzes the transfer of the gamma-phosphate of ATP to D-galactose to form alpha-D-galactose-1-phosphate (Gal-1-P). The chain is Galactokinase from Aeromonas hydrophila subsp. hydrophila (strain ATCC 7966 / DSM 30187 / BCRC 13018 / CCUG 14551 / JCM 1027 / KCTC 2358 / NCIMB 9240 / NCTC 8049).